A 160-amino-acid polypeptide reads, in one-letter code: Troponin C, skeletal muscle (160 aa).

At Thr-2 the chain carries N-acetylthreonine. 4 EF-hand domains span residues 15–50 (EMIAEFKAAFDMFDADGGGDISVKELGTVMRMLGQT), 51–86 (PTKEELDAIIEEVDEDGSGTIDFEEFLVMMVRQMKE), 91–126 (KSEEELAECFRIFDRNADGYIDPEELAEIFRASGEH), and 127–160 (VTDEEIESLMKDGDKNNDGRIDFDEFLKMMEGVQ). Ca(2+) is bound by residues Asp-28, Asp-30, Asp-34, Glu-39, Asp-64, Asp-66, Ser-68, Thr-70, Glu-75, Asp-104, Asn-106, Asp-108, Tyr-110, Glu-115, Asp-140, Asn-142, Asp-144, Arg-146, and Glu-151.

Belongs to the troponin C family.

Its function is as follows. Troponin is the central regulatory protein of striated muscle contraction. Tn consists of three components: Tn-I which is the inhibitor of actomyosin ATPase, Tn-T which contains the binding site for tropomyosin and Tn-C. The binding of calcium to Tn-C abolishes the inhibitory action of Tn on actin filaments. In Homo sapiens (Human), this protein is Troponin C, skeletal muscle (TNNC2).